The following is a 467-amino-acid chain: MNTRQLLSVGIDIGTTTTQVIFSRLELVNRAAVSQVPRYEFIKRDISWQSPVFFTPVDKQGGLKEVELKALILAQYQAAGIAPESVDSGAIIITGESAKTRNARPAVMALSQSLGDFVVASAGPHLESVIAGHGAGAQSLSEQRMCRVLNIDIGGGTSNYALFDAGKVSGTACLNVGGRLLETDAQGRVVYAHQPGQMIIDEVFGSGTDARALAAAQLGQVARRMADLIVEVITGALSPLAQSLMQTGLLPADITPEVITLSGGVGECYRNQPADPFCFSDIGPLLATALHEHPRLREMNVQFPAQTVRATVIGAGAHTLSLSGSTIWLEDVQLPLRNLPVAIPQDDADLVNAWRQALLQLDLDPQTDAYVLALPATLPVRYAALLTVINALTAFVARYPNPHPLLVVAEQDFGKALGMLLRPQLPQLPLAVIDEVVVRAGDYIDIGTPLFGGSVVPVTVKSLAFPS.

The protein belongs to the EutA family.

Its subcellular location is the bacterial microcompartment. The protein operates within amine and polyamine degradation; ethanolamine degradation. In terms of biological role, reactivates suicidally inhibited ethanolamine ammonia-lyase (EAL), cyanocobalamin-inactivated EAL and O(2)-inactivated EAL; requires Mg(2+), ATP and adenosylcobalamin. Reactivation probably occurs by the ATP-dependent exchange of cobalamin. Protects EAL from inhibition by CN-B12, does not have adenosylation activity. Expression of the eut operon allows this bacteria to use ethanolamine as a carbon, nitrogen and energy source. It relies on cobalamin (vitamin B12) both as a cofactor for the ethanolamine ammonia-lyase (EAL) activity and to induce the operon. EA enhances bacterial survival in macrophages in a concentration-dependent manner, suggesting it is an important nutrient during infection. This chain is Ethanolamine ammonia-lyase reactivase EutA, found in Salmonella typhimurium (strain LT2 / SGSC1412 / ATCC 700720).